Consider the following 141-residue polypeptide: Thioredoxin-like protein SkfH (141 aa).

The 140-residue stretch at 2 to 141 folds into the Thioredoxin domain; it reads KDEQMLTEWP…DKMLKKIAGL (140 aa). C41 and C44 are oxidised to a cystine.

Its function is as follows. Required for production of the bacteriocin SkfA. The protein is Thioredoxin-like protein SkfH of Bacillus subtilis (strain 168).